The following is a 476-amino-acid chain: RuvB-like helicase 2 (476 aa).

ATP is bound at residue 76 to 83 (GPPSTGKT).

Belongs to the RuvB family. In terms of assembly, may form heterododecamers with RVB1. Component of the SWR1 chromatin remodeling complex, the INO80 chromatin remodeling complex, and of the R2TP complex.

The protein resides in the nucleus. It catalyses the reaction ATP + H2O = ADP + phosphate + H(+). In terms of biological role, DNA helicase which participates in several chromatin remodeling complexes, including the SWR1 and the INO80 complexes. The SWR1 complex mediates the ATP-dependent exchange of histone H2A for the H2A variant HZT1 leading to transcriptional regulation of selected genes by chromatin remodeling. The INO80 complex remodels chromatin by shifting nucleosomes and is involved in DNA repair. Also involved in pre-rRNA processing. The protein is RuvB-like helicase 2 (RVB2) of Candida glabrata (strain ATCC 2001 / BCRC 20586 / JCM 3761 / NBRC 0622 / NRRL Y-65 / CBS 138) (Yeast).